Here is a 740-residue protein sequence, read N- to C-terminus: Elongation factor 2 (740 aa).

A tr-type G domain is found at 23–264 (AQIRNAGTLA…MIIEHVPPPN (242 aa)). GTP contacts are provided by residues 32-39 (AHVDHGKT), 98-102 (DTPGH), and 152-155 (NKID). The residue at position 605 (His-605) is a Diphthamide.

The protein belongs to the TRAFAC class translation factor GTPase superfamily. Classic translation factor GTPase family. EF-G/EF-2 subfamily.

Its subcellular location is the cytoplasm. Catalyzes the GTP-dependent ribosomal translocation step during translation elongation. During this step, the ribosome changes from the pre-translocational (PRE) to the post-translocational (POST) state as the newly formed A-site-bound peptidyl-tRNA and P-site-bound deacylated tRNA move to the P and E sites, respectively. Catalyzes the coordinated movement of the two tRNA molecules, the mRNA and conformational changes in the ribosome. The polypeptide is Elongation factor 2 (Pyrobaculum arsenaticum (strain DSM 13514 / JCM 11321 / PZ6)).